The chain runs to 757 residues: Elongation factor G, mitochondrial (757 aa).

A mitochondrion-targeting transit peptide spans 1–39 (MLLVPRVPVVMQGKCGLLKISRPLQGSLSRGFHFSRAHR). Residues 65–346 (QKLRNIGISA…AIVDYLPNPS (282 aa)) form the tr-type G domain. Residues 74–81 (AHIDSGKT), 145–149 (DTPGH), and 199–202 (NKMD) each bind GTP.

The protein belongs to the TRAFAC class translation factor GTPase superfamily. Classic translation factor GTPase family. EF-G/EF-2 subfamily.

Its subcellular location is the mitochondrion. The protein operates within protein biosynthesis; polypeptide chain elongation. In terms of biological role, mitochondrial GTPase that catalyzes the GTP-dependent ribosomal translocation step during translation elongation. During this step, the ribosome changes from the pre-translocational (PRE) to the post-translocational (POST) state as the newly formed A-site-bound peptidyl-tRNA and P-site-bound deacylated tRNA move to the P and E sites, respectively. Catalyzes the coordinated movement of the two tRNA molecules, the mRNA and conformational changes in the ribosome. The chain is Elongation factor G, mitochondrial from Candida glabrata (strain ATCC 2001 / BCRC 20586 / JCM 3761 / NBRC 0622 / NRRL Y-65 / CBS 138) (Yeast).